Here is a 115-residue protein sequence, read N- to C-terminus: NAD(P)H-quinone oxidoreductase subunit M (115 aa).

The protein belongs to the complex I NdhM subunit family. NDH-1 can be composed of about 15 different subunits; different subcomplexes with different compositions have been identified which probably have different functions.

The protein localises to the cellular thylakoid membrane. It carries out the reaction a plastoquinone + NADH + (n+1) H(+)(in) = a plastoquinol + NAD(+) + n H(+)(out). It catalyses the reaction a plastoquinone + NADPH + (n+1) H(+)(in) = a plastoquinol + NADP(+) + n H(+)(out). Its function is as follows. NDH-1 shuttles electrons from an unknown electron donor, via FMN and iron-sulfur (Fe-S) centers, to quinones in the respiratory and/or the photosynthetic chain. The immediate electron acceptor for the enzyme in this species is believed to be plastoquinone. Couples the redox reaction to proton translocation, and thus conserves the redox energy in a proton gradient. Cyanobacterial NDH-1 also plays a role in inorganic carbon-concentration. This is NAD(P)H-quinone oxidoreductase subunit M from Prochlorococcus marinus (strain NATL1A).